Here is a 165-residue protein sequence, read N- to C-terminus: 2-C-methyl-D-erythritol 2,4-cyclodiphosphate synthase (165 aa).

Residues D8 and H10 each contribute to the a divalent metal cation site. 4-CDP-2-C-methyl-D-erythritol 2-phosphate contacts are provided by residues 8–10 (DVH) and 34–35 (HS). A divalent metal cation is bound at residue H42. Residues 56–58 (DIG), 61–65 (FPDTD), 100–106 (AQAPKMA), 132–135 (TTTE), F139, and R142 contribute to the 4-CDP-2-C-methyl-D-erythritol 2-phosphate site.

The protein belongs to the IspF family. In terms of assembly, homotrimer. Requires a divalent metal cation as cofactor.

It carries out the reaction 4-CDP-2-C-methyl-D-erythritol 2-phosphate = 2-C-methyl-D-erythritol 2,4-cyclic diphosphate + CMP. Its pathway is isoprenoid biosynthesis; isopentenyl diphosphate biosynthesis via DXP pathway; isopentenyl diphosphate from 1-deoxy-D-xylulose 5-phosphate: step 4/6. In terms of biological role, involved in the biosynthesis of isopentenyl diphosphate (IPP) and dimethylallyl diphosphate (DMAPP), two major building blocks of isoprenoid compounds. Catalyzes the conversion of 4-diphosphocytidyl-2-C-methyl-D-erythritol 2-phosphate (CDP-ME2P) to 2-C-methyl-D-erythritol 2,4-cyclodiphosphate (ME-CPP) with a corresponding release of cytidine 5-monophosphate (CMP). The sequence is that of 2-C-methyl-D-erythritol 2,4-cyclodiphosphate synthase from Pectobacterium atrosepticum (strain SCRI 1043 / ATCC BAA-672) (Erwinia carotovora subsp. atroseptica).